Consider the following 378-residue polypeptide: Queuine tRNA-ribosyltransferase (378 aa).

Asp-89 acts as the Proton acceptor in catalysis. Substrate contacts are provided by residues 89-93 (DSGGF), Asp-143, Gln-194, and Gly-221. Residues 252–258 (GVGTPAN) are RNA binding. Asp-271 acts as the Nucleophile in catalysis. Zn(2+)-binding residues include Cys-309, Cys-311, Cys-314, and His-340.

The protein belongs to the queuine tRNA-ribosyltransferase family. Homodimer. Within each dimer, one monomer is responsible for RNA recognition and catalysis, while the other monomer binds to the replacement base PreQ1. It depends on Zn(2+) as a cofactor.

The enzyme catalyses 7-aminomethyl-7-carbaguanine + guanosine(34) in tRNA = 7-aminomethyl-7-carbaguanosine(34) in tRNA + guanine. Its pathway is tRNA modification; tRNA-queuosine biosynthesis. Functionally, catalyzes the base-exchange of a guanine (G) residue with the queuine precursor 7-aminomethyl-7-deazaguanine (PreQ1) at position 34 (anticodon wobble position) in tRNAs with GU(N) anticodons (tRNA-Asp, -Asn, -His and -Tyr). Catalysis occurs through a double-displacement mechanism. The nucleophile active site attacks the C1' of nucleotide 34 to detach the guanine base from the RNA, forming a covalent enzyme-RNA intermediate. The proton acceptor active site deprotonates the incoming PreQ1, allowing a nucleophilic attack on the C1' of the ribose to form the product. After dissociation, two additional enzymatic reactions on the tRNA convert PreQ1 to queuine (Q), resulting in the hypermodified nucleoside queuosine (7-(((4,5-cis-dihydroxy-2-cyclopenten-1-yl)amino)methyl)-7-deazaguanosine). This is Queuine tRNA-ribosyltransferase from Lachnospira eligens (strain ATCC 27750 / DSM 3376 / VPI C15-48 / C15-B4) (Eubacterium eligens).